Consider the following 254-residue polypeptide: Putative epimerase LsrE (254 aa).

Residues 14-34 traverse the membrane as a helical segment; it reads VALLASYPLSVGILAGQWIAL. Residues histidine 50, aspartate 52, and histidine 81 each contribute to the a divalent metal cation site. Aspartate 52 (proton acceptor) is an active-site residue. Residues histidine 81, 166 to 169, 199 to 201, and 221 to 222 each bind substrate; these read GYGS, DGS, and GS. A divalent metal cation is bound at residue aspartate 199. The active-site Proton donor is aspartate 199.

This sequence belongs to the ribulose-phosphate 3-epimerase family. Requires a divalent metal cation as cofactor.

Its subcellular location is the cell membrane. The polypeptide is Putative epimerase LsrE (lsrE) (Salmonella paratyphi A (strain ATCC 9150 / SARB42)).